The sequence spans 874 residues: Probable cation-transporting P-type ATPase (874 aa).

Residues 1-41 (MNSWTGLSEQAAIKSRQEHGANFLPEKKATPFWLLFLQQFK) lie on the Cytoplasmic side of the membrane. A helical membrane pass occupies residues 42 to 62 (SLVVILLLLASLLSFVVAIVS). Topologically, residues 63 to 79 (GLRSNWNFNHDLIIEWV) are extracellular. A helical membrane pass occupies residues 80-100 (QPFIILLTVFANSLIGSIQEF). The Cytoplasmic segment spans residues 101–237 (KAQKSASALK…TKLSPLQQKL (137 aa)). Residues 238 to 257 (EKIGKWFSWFGLGLFAVVFL) traverse the membrane as a helical segment. The Extracellular segment spans residues 258 to 275 (VQTALLGFDNFTNNWSIA). Residues 276-293 (LIGAIALVVAIIPEGLVT) traverse the membrane as a helical segment. Residues 294-644 (FINVIFALSV…EEGRKTFLTC (351 aa)) are Cytoplasmic-facing. D331 acts as the 4-aspartylphosphate intermediate in catalysis. Mg(2+) contacts are provided by D589 and D593. The helical transmembrane segment at 645-664 (KRVLLNLFLTSIAGTVVVLL) threads the bilayer. Over 665 to 687 (GLFILGQVFKTNLLQQGHDFQVF) the chain is Extracellular. Residues 688 to 708 (SPTQLLIINLFVHGFPAVALA) form a helical membrane-spanning segment. Topologically, residues 709–726 (VQPVKEKLMVGSFSTKNL) are cytoplasmic. A helical transmembrane segment spans residues 727-749 (FYNRQGFDLIWQSLFLSFLTLLF). At 750–770 (YSLGIIYAINNRDLQTSGDLI) the chain is on the extracellular side. A helical membrane pass occupies residues 771-790 (NRAGSTCGFFILGASAALNS). The Cytoplasmic segment spans residues 791 to 803 (LNLMVDKPLLMTN). A helical membrane pass occupies residues 804-826 (PWFFKLVWIGSLASILVFLLIIF). Residues 827–844 (INPLGLVFNVLQDLTNHP) are Extracellular-facing. A helical transmembrane segment spans residues 845–865 (VLISYSFGGVILYMGMNEVVK). Topologically, residues 866–874 (LIRLGYGNI) are cytoplasmic.

This sequence belongs to the cation transport ATPase (P-type) (TC 3.A.3) family. Type II subfamily.

It localises to the cell membrane. The enzyme catalyses ATP + H2O = ADP + phosphate + H(+). Could mediate calcium influx. This chain is Probable cation-transporting P-type ATPase (pacL), found in Mycoplasma genitalium (strain ATCC 33530 / DSM 19775 / NCTC 10195 / G37) (Mycoplasmoides genitalium).